A 759-amino-acid polypeptide reads, in one-letter code: Phosphoribosylformylglycinamidine synthase subunit PurL (759 aa).

The active site involves His-34. Residue Tyr-37 coordinates ATP. Glu-95 contacts Mg(2+). Residues 96-99 and Arg-118 contribute to the substrate site; that span reads SHNH. His-97 functions as the Proton acceptor in the catalytic mechanism. Asp-119 is a binding site for Mg(2+). A substrate-binding site is contributed by Gln-243. Position 271 (Asp-271) interacts with Mg(2+). Residue 315-317 participates in substrate binding; sequence ESQ. The segment at 388–422 is disordered; sequence DGAPMNDLASESPTQPDRDLPDPEPSLDEAVESVV. 2 residues coordinate ATP: Asp-520 and Gly-557. Asn-558 is a Mg(2+) binding site. A substrate-binding site is contributed by Ser-560.

Belongs to the FGAMS family. In terms of assembly, monomer. Part of the FGAM synthase complex composed of 1 PurL, 1 PurQ and 2 PurS subunits.

It is found in the cytoplasm. The catalysed reaction is N(2)-formyl-N(1)-(5-phospho-beta-D-ribosyl)glycinamide + L-glutamine + ATP + H2O = 2-formamido-N(1)-(5-O-phospho-beta-D-ribosyl)acetamidine + L-glutamate + ADP + phosphate + H(+). Its pathway is purine metabolism; IMP biosynthesis via de novo pathway; 5-amino-1-(5-phospho-D-ribosyl)imidazole from N(2)-formyl-N(1)-(5-phospho-D-ribosyl)glycinamide: step 1/2. Its function is as follows. Part of the phosphoribosylformylglycinamidine synthase complex involved in the purines biosynthetic pathway. Catalyzes the ATP-dependent conversion of formylglycinamide ribonucleotide (FGAR) and glutamine to yield formylglycinamidine ribonucleotide (FGAM) and glutamate. The FGAM synthase complex is composed of three subunits. PurQ produces an ammonia molecule by converting glutamine to glutamate. PurL transfers the ammonia molecule to FGAR to form FGAM in an ATP-dependent manner. PurS interacts with PurQ and PurL and is thought to assist in the transfer of the ammonia molecule from PurQ to PurL. The polypeptide is Phosphoribosylformylglycinamidine synthase subunit PurL (Halorubrum lacusprofundi (strain ATCC 49239 / DSM 5036 / JCM 8891 / ACAM 34)).